Here is a 419-residue protein sequence, read N- to C-terminus: Glutamate dehydrogenase (419 aa).

The active site involves Lys-105. 219–225 (GYGNAGY) is an NAD(+) binding site.

This sequence belongs to the Glu/Leu/Phe/Val dehydrogenases family. As to quaternary structure, homohexamer.

The protein resides in the cytoplasm. It catalyses the reaction L-glutamate + NAD(+) + H2O = 2-oxoglutarate + NH4(+) + NADH + H(+). It carries out the reaction L-glutamate + NADP(+) + H2O = 2-oxoglutarate + NH4(+) + NADPH + H(+). The protein is Glutamate dehydrogenase (gdhA) of Thermococcus litoralis (strain ATCC 51850 / DSM 5473 / JCM 8560 / NS-C).